The primary structure comprises 262 residues: Acyl-[acyl-carrier-protein]--UDP-N-acetylglucosamine O-acyltransferase (262 aa).

It belongs to the transferase hexapeptide repeat family. LpxA subfamily. Homotrimer.

The protein resides in the cytoplasm. The catalysed reaction is a (3R)-hydroxyacyl-[ACP] + UDP-N-acetyl-alpha-D-glucosamine = a UDP-3-O-[(3R)-3-hydroxyacyl]-N-acetyl-alpha-D-glucosamine + holo-[ACP]. It functions in the pathway glycolipid biosynthesis; lipid IV(A) biosynthesis; lipid IV(A) from (3R)-3-hydroxytetradecanoyl-[acyl-carrier-protein] and UDP-N-acetyl-alpha-D-glucosamine: step 1/6. Its function is as follows. Involved in the biosynthesis of lipid A, a phosphorylated glycolipid that anchors the lipopolysaccharide to the outer membrane of the cell. The protein is Acyl-[acyl-carrier-protein]--UDP-N-acetylglucosamine O-acyltransferase of Paraburkholderia phytofirmans (strain DSM 17436 / LMG 22146 / PsJN) (Burkholderia phytofirmans).